A 239-amino-acid chain; its full sequence is DNA oxidative demethylase ALKBH2 (239 aa).

Positions 3-7 match the PCNA-binding motif; sequence KFLVR. A disordered region spans residues 11–32; sequence RDLQGGGEEPAPTGGASGDLKS. Residues 80–82 and 100–102 contribute to the substrate site; these read FGK and YTF. Positions 130–235 constitute a Fe2OG dioxygenase domain; it reads TFNFVLVNRY…RVNLTFRKIL (106 aa). The 2-oxoglutarate site is built by Asn137, Tyr139, and His149. Fe cation is bound by residues His149 and Asp151. Residue Asp152 participates in substrate binding. Residues His214, Arg226, Thr230, and Arg232 each coordinate 2-oxoglutarate. His214 provides a ligand contact to Fe cation.

Belongs to the alkB family. In terms of assembly, interacts with PCNA homotrimer; this interaction is enhanced during the S-phase of the cell cycle. Interacts with nucleolar proteins NCL, UBTF and NPM1. Interacts with XRCC5-XRCC6 heterodimer. Fe(2+) serves as cofactor. In terms of tissue distribution, detected in liver, testis and kidney (at protein level). Detected in heart and testis.

The protein resides in the nucleus. It is found in the nucleolus. Its subcellular location is the nucleoplasm. The enzyme catalyses a methylated nucleobase within DNA + 2-oxoglutarate + O2 = a nucleobase within DNA + formaldehyde + succinate + CO2. The catalysed reaction is an N(1)-methyl-2'-deoxyadenosine in double-stranded DNA + 2-oxoglutarate + O2 = a 2'-deoxyadenosine in double-stranded DNA + formaldehyde + succinate + CO2 + H(+). It carries out the reaction an N(1)-methyl-2'-deoxyadenosine in single-stranded DNA + 2-oxoglutarate + O2 = a 2'-deoxyadenosine in single-stranded DNA + formaldehyde + succinate + CO2 + H(+). It catalyses the reaction an N(3)-methyl-2'-deoxycytidine in double-stranded DNA + 2-oxoglutarate + O2 = a 2'-deoxycytidine in double-stranded DNA + formaldehyde + succinate + CO2 + H(+). The enzyme catalyses an N(3)-methyl-2'-deoxycytidine in single-stranded DNA + 2-oxoglutarate + O2 = a 2'-deoxycytidine in single-stranded DNA + formaldehyde + succinate + CO2 + H(+). The catalysed reaction is a 1,N(6)-etheno-2'-deoxyadenosine in double-stranded DNA + 2-oxoglutarate + O2 + H2O = a 2'-deoxyadenosine in double-stranded DNA + glyoxal + succinate + CO2. It carries out the reaction a 1,N(6)-etheno-2'-deoxyadenosine in single-stranded DNA + 2-oxoglutarate + O2 + H2O = a 2'-deoxyadenosine in single-stranded DNA + glyoxal + succinate + CO2. It catalyses the reaction a 3,N(4)-etheno-2'-deoxycytidine in double-stranded DNA + 2-oxoglutarate + O2 + H2O = a 2'-deoxycytidine in double-stranded DNA + glyoxal + succinate + CO2. The enzyme catalyses a 3,N(4)-etheno-2'-deoxycytidine in single-stranded DNA + 2-oxoglutarate + O2 + H2O = a 2'-deoxycytidine in single-stranded DNA + glyoxal + succinate + CO2. The catalysed reaction is a 1,N(2)-etheno-2'-deoxyguanosine in double-stranded DNA + 2-oxoglutarate + O2 + H2O = a 2'-deoxyguanosine in double-stranded DNA + glyoxal + succinate + CO2. Its activity is regulated as follows. Activated by magnesium ions. Its function is as follows. Dioxygenase that repairs alkylated nucleic acid bases by direct reversal oxidative dealkylation. Can process both double-stranded (ds) and single-stranded (ss) DNA substrates, with a strong preference for dsDNA. Uses molecular oxygen, 2-oxoglutarate and iron as cofactors to oxidize the alkyl groups that are subsequently released as aldehydes, regenerating the undamaged bases. Probes the base pair stability, locates a weakened base pair and flips the damaged base to accommodate the lesion in its active site for efficient catalysis. Repairs monoalkylated bases, specifically N1-methyladenine and N3-methylcytosine, as well as higher order alkyl adducts such as bases modified with exocyclic bridged adducts known as etheno adducts including 1,N6-ethenoadenine, 3,N4-ethenocytosine and 1,N2-ethenoguanine. Acts as a gatekeeper of genomic integrity under alkylation stress. Efficiently repairs alkylated lesions in ribosomal DNA (rDNA). These lesions can cause ss- and dsDNA strand breaks that severely impair rDNA transcription. In a response mechanism to DNA damage, associates with PCNA at replication forks to repair alkylated adducts prior to replication. The sequence is that of DNA oxidative demethylase ALKBH2 (Alkbh2) from Mus musculus (Mouse).